A 271-amino-acid polypeptide reads, in one-letter code: Formamidopyrimidine-DNA glycosylase (271 aa).

Pro-2 serves as the catalytic Schiff-base intermediate with DNA. Glu-3 (proton donor) is an active-site residue. Catalysis depends on Lys-58, which acts as the Proton donor; for beta-elimination activity. DNA-binding residues include His-92, Arg-111, and Lys-152. The segment at 237–271 adopts an FPG-type zinc-finger fold; sequence YVYGKVQKPCKICNNIITLIRQNGRSTYFCNACQN. Arg-261 serves as the catalytic Proton donor; for delta-elimination activity.

It belongs to the FPG family. Monomer. It depends on Zn(2+) as a cofactor.

The catalysed reaction is Hydrolysis of DNA containing ring-opened 7-methylguanine residues, releasing 2,6-diamino-4-hydroxy-5-(N-methyl)formamidopyrimidine.. It catalyses the reaction 2'-deoxyribonucleotide-(2'-deoxyribose 5'-phosphate)-2'-deoxyribonucleotide-DNA = a 3'-end 2'-deoxyribonucleotide-(2,3-dehydro-2,3-deoxyribose 5'-phosphate)-DNA + a 5'-end 5'-phospho-2'-deoxyribonucleoside-DNA + H(+). Functionally, involved in base excision repair of DNA damaged by oxidation or by mutagenic agents. Acts as a DNA glycosylase that recognizes and removes damaged bases. Has a preference for oxidized purines, such as 7,8-dihydro-8-oxoguanine (8-oxoG). Has AP (apurinic/apyrimidinic) lyase activity and introduces nicks in the DNA strand. Cleaves the DNA backbone by beta-delta elimination to generate a single-strand break at the site of the removed base with both 3'- and 5'-phosphates. The chain is Formamidopyrimidine-DNA glycosylase from Wolbachia pipientis wMel.